Here is a 305-residue protein sequence, read N- to C-terminus: UDP-3-O-acyl-N-acetylglucosamine deacetylase (305 aa).

Residues histidine 78, histidine 237, and aspartate 241 each contribute to the Zn(2+) site. Histidine 264 serves as the catalytic Proton donor.

This sequence belongs to the LpxC family. Zn(2+) serves as cofactor.

It catalyses the reaction a UDP-3-O-[(3R)-3-hydroxyacyl]-N-acetyl-alpha-D-glucosamine + H2O = a UDP-3-O-[(3R)-3-hydroxyacyl]-alpha-D-glucosamine + acetate. It participates in glycolipid biosynthesis; lipid IV(A) biosynthesis; lipid IV(A) from (3R)-3-hydroxytetradecanoyl-[acyl-carrier-protein] and UDP-N-acetyl-alpha-D-glucosamine: step 2/6. In terms of biological role, catalyzes the hydrolysis of UDP-3-O-myristoyl-N-acetylglucosamine to form UDP-3-O-myristoylglucosamine and acetate, the committed step in lipid A biosynthesis. This chain is UDP-3-O-acyl-N-acetylglucosamine deacetylase, found in Burkholderia cenocepacia (strain ATCC BAA-245 / DSM 16553 / LMG 16656 / NCTC 13227 / J2315 / CF5610) (Burkholderia cepacia (strain J2315)).